The chain runs to 824 residues: FT-interacting protein 1 (824 aa).

C2 domains follow at residues 48 to 170 (WLGL…PQWY), 217 to 341 (VRGE…SRWF), and 385 to 522 (YISD…THAY). A run of 3 helical transmembrane segments spans residues 625–645 (AVSLFSGAAAAARWFADVCHW), 657–677 (LLLILVWYPELILPTVFLYMF), and 764–784 (ATCLFVVFCLVAAVVLYVTPF).

Belongs to the MCTP family. Interacts with RFT1 and PI4KG4. In terms of tissue distribution, specifically expressed in the phloem including companion cells.

The protein resides in the endoplasmic reticulum membrane. Involved in the export of the long day-specific flower-promoting signal (florigen) RFT1 from the phloem companion cells to sieve elements. Promotes flowering under long days through the transport of RFT1 from the leaves to the shoot apical meristem (SAM). The sequence is that of FT-interacting protein 1 from Oryza sativa subsp. japonica (Rice).